Here is a 634-residue protein sequence, read N- to C-terminus: tRNA uridine 5-carboxymethylaminomethyl modification enzyme MnmG (634 aa).

14–19 (GGGHAG) lines the FAD pocket. 279-293 (GPRYCPSIEDKVVRF) is an NAD(+) binding site.

The protein belongs to the MnmG family. As to quaternary structure, homodimer. Heterotetramer of two MnmE and two MnmG subunits. It depends on FAD as a cofactor.

It is found in the cytoplasm. NAD-binding protein involved in the addition of a carboxymethylaminomethyl (cmnm) group at the wobble position (U34) of certain tRNAs, forming tRNA-cmnm(5)s(2)U34. The protein is tRNA uridine 5-carboxymethylaminomethyl modification enzyme MnmG of Xanthomonas campestris pv. campestris (strain 8004).